Consider the following 292-residue polypeptide: ATP synthase gamma chain (292 aa).

This sequence belongs to the ATPase gamma chain family. F-type ATPases have 2 components, CF(1) - the catalytic core - and CF(0) - the membrane proton channel. CF(1) has five subunits: alpha(3), beta(3), gamma(1), delta(1), epsilon(1). CF(0) has three main subunits: a, b and c.

Its subcellular location is the cell inner membrane. Its function is as follows. Produces ATP from ADP in the presence of a proton gradient across the membrane. The gamma chain is believed to be important in regulating ATPase activity and the flow of protons through the CF(0) complex. This chain is ATP synthase gamma chain, found in Rhodopseudomonas palustris (strain BisB18).